Here is a 472-residue protein sequence, read N- to C-terminus: Phosphoglucosamine mutase (472 aa).

The active-site Phosphoserine intermediate is the Ser123. 4 residues coordinate Mg(2+): Ser123, Asp262, Asp264, and Asp266. Phosphoserine is present on Ser123.

This sequence belongs to the phosphohexose mutase family. Requires Mg(2+) as cofactor. In terms of processing, activated by phosphorylation.

The enzyme catalyses alpha-D-glucosamine 1-phosphate = D-glucosamine 6-phosphate. Catalyzes the conversion of glucosamine-6-phosphate to glucosamine-1-phosphate. This Synechococcus elongatus (strain ATCC 33912 / PCC 7942 / FACHB-805) (Anacystis nidulans R2) protein is Phosphoglucosamine mutase.